Reading from the N-terminus, the 245-residue chain is Large ribosomal subunit protein uL4 (245 aa).

Over residues 1-13 (MSRVATSDPSVTA) the composition is skewed to polar residues. Disordered regions lie at residues 1-28 (MSRV…EGGS), 56-114 (ARQG…QRTP), and 224-245 (TSTA…EENK). Residues 59 to 71 (GTHDTKTRGEVRG) show a composition bias toward basic and acidic residues. Residues 72–83 (GGRKPYRQKGTG) show a composition bias toward basic residues.

Belongs to the universal ribosomal protein uL4 family. Part of the 50S ribosomal subunit.

In terms of biological role, one of the primary rRNA binding proteins, this protein initially binds near the 5'-end of the 23S rRNA. It is important during the early stages of 50S assembly. It makes multiple contacts with different domains of the 23S rRNA in the assembled 50S subunit and ribosome. Forms part of the polypeptide exit tunnel. The protein is Large ribosomal subunit protein uL4 of Frankia casuarinae (strain DSM 45818 / CECT 9043 / HFP020203 / CcI3).